Consider the following 295-residue polypeptide: Pantothenate synthetase (295 aa).

29 to 36 contacts ATP; sequence MGALHSGH. His-36 functions as the Proton donor in the catalytic mechanism. Gln-60 is a (R)-pantoate binding site. Position 60 (Gln-60) interacts with beta-alanine. An ATP-binding site is contributed by 158–161; it reads GQKD. A (R)-pantoate-binding site is contributed by Gln-164. Residues Val-187 and 195 to 198 contribute to the ATP site; that span reads LSSR.

Belongs to the pantothenate synthetase family. As to quaternary structure, homodimer.

The protein resides in the cytoplasm. It carries out the reaction (R)-pantoate + beta-alanine + ATP = (R)-pantothenate + AMP + diphosphate + H(+). Its pathway is cofactor biosynthesis; (R)-pantothenate biosynthesis; (R)-pantothenate from (R)-pantoate and beta-alanine: step 1/1. Its function is as follows. Catalyzes the condensation of pantoate with beta-alanine in an ATP-dependent reaction via a pantoyl-adenylate intermediate. This Paenarthrobacter aurescens (strain TC1) protein is Pantothenate synthetase.